The sequence spans 290 residues: Glutaredoxin domain-containing cysteine-rich protein 1 (290 aa).

The Glutaredoxin domain maps to 127–234 (LQQPSTDLEF…DILTKIERVQ (108 aa)).

It belongs to the GRXCR1 family. In terms of tissue distribution, expressed at low levels in adult lung, brain and duodenum with moderate levels in testis. Highly expressed in fetal cochlea.

The protein localises to the cell projection. The protein resides in the stereocilium. It localises to the microvillus. Its subcellular location is the kinocilium. Functionally, may play a role in actin filament architecture in developing stereocilia of sensory cells. This chain is Glutaredoxin domain-containing cysteine-rich protein 1 (GRXCR1), found in Homo sapiens (Human).